Consider the following 497-residue polypeptide: ATP-dependent RNA helicase CshA (497 aa).

Positions M1 to E29 match the Q motif motif. A Helicase ATP-binding domain is found at I32 to V202. ATP is bound at residue A45–T52. Residues D150 to D153 carry the DEAD box motif. The Helicase C-terminal domain occupies D228 to A373. A disordered region spans residues A425–N497. A compositionally biased stretch (low complexity) spans R448–G458. Basic residues-rich tracts occupy residues N459–S473 and K481–N497.

This sequence belongs to the DEAD box helicase family. CshA subfamily. Oligomerizes, may be a member of the RNA degradosome.

It localises to the cytoplasm. The protein localises to the cell membrane. The catalysed reaction is ATP + H2O = ADP + phosphate + H(+). Functionally, DEAD-box RNA helicase possibly involved in RNA degradation. Unwinds dsRNA in both 5'- and 3'-directions, has RNA-dependent ATPase activity. Over-expression leads to cell aggregation. The chain is ATP-dependent RNA helicase CshA from Limosilactobacillus reuteri (Lactobacillus reuteri).